A 276-amino-acid chain; its full sequence is RRP15-like protein (276 aa).

Disordered stretches follow at residues 1 to 132 and 201 to 276; these read MALL…QLRV and KRAK…DGEE. 2 stretches are compositionally biased toward basic and acidic residues: residues 75–95 and 226–245; these read FQKD…KADV and KGSS…DFMT. Residues 254–276 are compositionally biased toward acidic residues; that stretch reads EEDDDEEGHNDEADDSDYDDGEE. The residue at position 269 (Ser-269) is a Phosphoserine. A Phosphotyrosine modification is found at Tyr-271.

Belongs to the RRP15 family.

The protein is RRP15-like protein of Drosophila melanogaster (Fruit fly).